A 622-amino-acid polypeptide reads, in one-letter code: Low affinity potassium transport system protein Kup (622 aa).

Helical transmembrane passes span 12-32 (ITLA…LYTL), 49-69 (VFGF…IKYL), 103-123 (VIMG…TPAI), 137-157 (PQLD…LFMI), 165-185 (VGKL…VLGL), 213-233 (VSFI…ALYA), 247-267 (WFTV…ALLL), 276-296 (PFFL…AALA), 337-357 (IYIP…IVSF), 363-383 (LAAA…ILST), 396-416 (FVAL…SANL), and 419-439 (LLSG…IMTT).

It belongs to the HAK/KUP transporter (TC 2.A.72) family.

Its subcellular location is the cell inner membrane. It catalyses the reaction K(+)(in) + H(+)(in) = K(+)(out) + H(+)(out). Functionally, responsible for the low-affinity transport of potassium into the cell. Likely operates as a K(+):H(+) symporter. The polypeptide is Low affinity potassium transport system protein Kup (Salmonella gallinarum (strain 287/91 / NCTC 13346)).